The chain runs to 393 residues: S-adenosylmethionine sensor upstream of mTORC1 (393 aa).

Residues 1–35 are disordered; that stretch reads MDLRSSAETDPDLSENHPGSVPAELQSRKQEQEKL. Residue arginine 94 participates in S-adenosyl-L-methionine binding. Residues 118 to 141 form a disordered region; sequence DEKSARHATAGNANTDTNAPPQLS. The span at 125-136 shows a compositional bias: low complexity; the sequence is ATAGNANTDTNA. Residues glycine 160, aspartate 178, aspartate 190, phenylalanine 191, and serine 232 each contribute to the S-adenosyl-L-methionine site. Residues 362–393 form a disordered region; the sequence is ELPETPYDSDSGESQSSSAPFYELEDPILLQS.

The protein belongs to the BMT2/SAMTOR family. In terms of assembly, interacts with the GATOR1 complex; interaction is disrupted when samtor binds S-adenosyl-L-methionine. Interacts with the KICSTOR complex; interaction is disrupted when bmt2/samtor binds S-adenosyl-L-methionine.

In terms of biological role, S-adenosyl-L-methionine-binding protein that acts as an inhibitor of mTORC1 signaling via interaction with the GATOR1 and KICSTOR complexes. Acts as a sensor of S-adenosyl-L-methionine to signal methionine sufficiency to mTORC1: in presence of methionine, binds S-adenosyl-L-methionine, leading to disrupt interaction with the GATOR1 and KICSTOR complexes and promote mTORC1 signaling. Upon methionine starvation, S-adenosyl-L-methionine levels are reduced, thereby promoting the association with GATOR1 and KICSTOR, leading to inhibit mTORC1 signaling. Probably also acts as a S-adenosyl-L-methionine-dependent methyltransferase. The polypeptide is S-adenosylmethionine sensor upstream of mTORC1 (Danio rerio (Zebrafish)).